Consider the following 329-residue polypeptide: Cardiolipin synthase (CMP-forming) (329 aa).

The transit peptide at 1-34 directs the protein to the mitochondrion; that stretch reads MPPSVATHASLLLKAAAAAAHLHPKPFFSPRAAP. A disordered region spans residues 27–55; that stretch reads FFSPRAAPPRIPSAPAPPAAGGSRYRPTT. Positions 32–44 are enriched in pro residues; the sequence is AAPPRIPSAPAPP. A run of 5 helical transmembrane segments spans residues 134–154, 156–176, 194–214, 228–248, and 298–318; these read LLTL…LLIS, FYME…AAAV, FGAF…LVLL, PWLL…MSAV, and VTSG…SLVV. The Mitochondrial intermembrane segment spans residues 319–329; sequence YMRKIWRILLK.

This sequence belongs to the CDP-alcohol phosphatidyltransferase class-I family. Mn(2+) serves as cofactor.

The protein resides in the mitochondrion inner membrane. It catalyses the reaction a CDP-1,2-diacyl-sn-glycerol + a 1,2-diacyl-sn-glycero-3-phospho-(1'-sn-glycerol) = a cardiolipin + CMP + H(+). Catalyzes the synthesis of cardiolipin (CL) (diphosphatidylglycerol) by specifically transferring a phosphatidyl group from CDP-diacylglycerol to phosphatidylglycerol (PG). CL is a key phospholipid in mitochondrial membranes and plays important roles in maintaining the functional integrity and dynamics of mitochondria under both optimal and stress conditions. This is Cardiolipin synthase (CMP-forming) from Oryza sativa subsp. japonica (Rice).